The sequence spans 263 residues: Linear gramicidin dehydrogenase LgrE (263 aa).

Residue Ser-96 is part of the active site.

Belongs to the thioesterase family.

Functionally, in the final step of gramicidin biosynthesis, reduces the pentadecapeptide-aldehyde intermediate, that is released from the terminal module of the non-ribosomal peptide synthetase LgrD, to the final product ethanolamine-containing gramicidin. This is Linear gramicidin dehydrogenase LgrE (lgrE) from Brevibacillus parabrevis.